The sequence spans 413 residues: Gamma-glutamyl phosphate reductase (413 aa).

It belongs to the gamma-glutamyl phosphate reductase family.

Its subcellular location is the cytoplasm. It catalyses the reaction L-glutamate 5-semialdehyde + phosphate + NADP(+) = L-glutamyl 5-phosphate + NADPH + H(+). It participates in amino-acid biosynthesis; L-proline biosynthesis; L-glutamate 5-semialdehyde from L-glutamate: step 2/2. Functionally, catalyzes the NADPH-dependent reduction of L-glutamate 5-phosphate into L-glutamate 5-semialdehyde and phosphate. The product spontaneously undergoes cyclization to form 1-pyrroline-5-carboxylate. This is Gamma-glutamyl phosphate reductase from Geobacillus sp. (strain WCH70).